The sequence spans 221 residues: Cytidylate kinase 1 (221 aa).

7–15 (GPSASGKSS) is an ATP binding site.

Belongs to the cytidylate kinase family. Type 1 subfamily.

The protein resides in the cytoplasm. The catalysed reaction is CMP + ATP = CDP + ADP. It catalyses the reaction dCMP + ATP = dCDP + ADP. This Borreliella burgdorferi (strain ATCC 35210 / DSM 4680 / CIP 102532 / B31) (Borrelia burgdorferi) protein is Cytidylate kinase 1.